The following is a 466-amino-acid chain: Cocosin 1 (466 aa).

The signal sequence occupies residues 1–22 (MGSSSLLSFSLCLLLLCHLSQA). 2 disulfides stabilise this stretch: Cys-45/Cys-78 and Cys-121/Cys-288. 2 Cupin type-1 domains span residues 50-242 (LNAL…ELAR) and 294-443 (QNIG…DEAR).

It belongs to the 11S seed storage protein (globulins) family. As to quaternary structure, hexamer; each subunit is composed of an acidic and a basic chain derived from a single precursor and linked by a disulfide bond. In terms of tissue distribution, endosperm of the seeds.

In terms of biological role, seed storage protein. The polypeptide is Cocosin 1 (Cocos nucifera (Coconut palm)).